Reading from the N-terminus, the 297-residue chain is MNDRADFVVPDITTRKNVGLSHDANDFTLPQPLDRYSAEDHATWATLYQRQCKLLPGRACDEFMEGLERLEVDADRVPDFNKLNQKLMAATGWKIVAVPGLIPDDVFFEHLANRRFPVTWWLREPHQLDYLQEPDVFHDLFGHVPLLINPVFADYLEAYGKGGVKAKALGALPMLARLYWYTVEFGLINTPAGMRIYGAGILSSKSESIYCLDSASPNRVGFDLMRIMNTRYRIDTFQKTYFVIDSFKQLFDATAPDFAPLYLQLADAQPWGAGDVAPDDLVLNAGDRQGWADTEDV.

Residues His138, His143, and Glu184 each contribute to the Fe cation site.

It belongs to the biopterin-dependent aromatic amino acid hydroxylase family. As to quaternary structure, monomer. It depends on Fe(2+) as a cofactor.

The enzyme catalyses (6R)-L-erythro-5,6,7,8-tetrahydrobiopterin + L-phenylalanine + O2 = (4aS,6R)-4a-hydroxy-L-erythro-5,6,7,8-tetrahydrobiopterin + L-tyrosine. Its pathway is amino-acid degradation; L-phenylalanine degradation; acetoacetate and fumarate from L-phenylalanine: step 1/6. This Chromobacterium violaceum (strain ATCC 12472 / DSM 30191 / JCM 1249 / CCUG 213 / NBRC 12614 / NCIMB 9131 / NCTC 9757 / MK) protein is Phenylalanine-4-hydroxylase (phhA).